The chain runs to 268 residues: tRNA pseudouridine synthase A (268 aa).

The Nucleophile role is filled by Asp-52. Tyr-110 is a substrate binding site.

This sequence belongs to the tRNA pseudouridine synthase TruA family. As to quaternary structure, homodimer.

It catalyses the reaction uridine(38/39/40) in tRNA = pseudouridine(38/39/40) in tRNA. Formation of pseudouridine at positions 38, 39 and 40 in the anticodon stem and loop of transfer RNAs. This Prochlorococcus marinus (strain MIT 9215) protein is tRNA pseudouridine synthase A.